A 147-amino-acid polypeptide reads, in one-letter code: Large ribosomal subunit protein bL9 (147 aa).

The protein belongs to the bacterial ribosomal protein bL9 family.

Its function is as follows. Binds to the 23S rRNA. The polypeptide is Large ribosomal subunit protein bL9 (Geotalea daltonii (strain DSM 22248 / JCM 15807 / FRC-32) (Geobacter daltonii)).